Consider the following 485-residue polypeptide: GTPase Der (485 aa).

EngA-type G domains follow at residues 3 to 167 (PTIA…PEPE) and 176 to 349 (PVFA…NAAM). Residues 9–16 (GRPNVGKS), 56–60 (DTGGF), 119–122 (NKGE), 182–189 (GRPNVGKS), 229–233 (DTAGV), and 294–297 (NKWD) each bind GTP. Residues 350-434 (IKMPTPKITR…PLRIQYNVSE (85 aa)) form the KH-like domain. The segment at 435–485 (NPYENAEDKPKKKPLRRVSLSNRIEKREGRKEEKNRFKKKTKVSVKKQFSK) is disordered. Over residues 457–469 (RIEKREGRKEEKN) the composition is skewed to basic and acidic residues. Basic residues predominate over residues 470 to 485 (RFKKKTKVSVKKQFSK).

It belongs to the TRAFAC class TrmE-Era-EngA-EngB-Septin-like GTPase superfamily. EngA (Der) GTPase family. Associates with the 50S ribosomal subunit.

Functionally, GTPase that plays an essential role in the late steps of ribosome biogenesis. The sequence is that of GTPase Der from Neisseria gonorrhoeae (strain NCCP11945).